An 841-amino-acid chain; its full sequence is mRNA export factor ICP27 homolog (841 aa).

2 disordered regions span residues 12–82 and 115–163; these read PFAG…QYDK and RAQG…TSPD. The segment covering 32 to 49 has biased composition (low complexity); the sequence is YSQQQSQHYYYGHNQSSY. Over residues 66–79 the composition is skewed to pro residues; it reads MPPPLSSPSSPPPQ. A compositionally biased stretch (low complexity) spans 132–147; that stretch reads SSLVSSNNSNNNTTLS. Cys-298, His-411, Cys-413, and Cys-418 together coordinate Zn(2+). The segment at 298–418 adopts a CHC2-type zinc-finger fold; sequence CLLDSPGGGG…PGHRCQNEIC (121 aa). Disordered stretches follow at residues 444–749 and 774–811; these read HPNG…DDLH and SVTP…TDQP. The span at 495–507 shows a compositional bias: basic and acidic residues; that stretch reads VDSRGGGGDRRGD. Residues 514-526 show a composition bias toward basic residues; that stretch reads NHHRHHTRRARTR. Basic and acidic residues predominate over residues 553 to 563; sequence RRGEAQRESNG. 2 stretches are compositionally biased toward low complexity: residues 568 to 579 and 591 to 603; these read KSPSTVSSTTVH and SRKS…QPET. The span at 614-623 shows a compositional bias: pro residues; that stretch reads MPPPPSPCSP. Residues 641-657 are compositionally biased toward basic and acidic residues; it reads RPHDPPSGEPADAEKEL. Positions 688 to 699 are enriched in low complexity; the sequence is DSSSSSSDSSSS. Basic and acidic residues predominate over residues 708–731; sequence EDCRELDLQSKRLEEALEERCERD. Composition is skewed to acidic residues over residues 732–749 and 793–809; these read FEAD…DDLH and DAEE…DETD.

This sequence belongs to the HHV-1 ICP27 protein family.

The protein resides in the virion tegument. The protein localises to the virion. It localises to the host nucleus. It is found in the host cytoplasm. Its function is as follows. Immediate early (EI) protein that plays many roles during productive infection including regulation of viral gene expression and nuclear export of intronless viral RNAs. In Mus musculus (Mouse), this protein is mRNA export factor ICP27 homolog.